Here is a 149-residue protein sequence, read N- to C-terminus: Calmodulin (149 aa).

Residue alanine 2 is modified to N-acetylalanine. EF-hand domains lie at glutamate 8–asparagine 43, proline 44–aspartate 79, aspartate 81–lysine 116, and leucine 117–lysine 149. Ca(2+) contacts are provided by aspartate 21, aspartate 23, aspartate 25, threonine 27, glutamate 32, aspartate 57, aspartate 59, asparagine 61, threonine 63, glutamate 68, aspartate 94, aspartate 96, asparagine 98, and glutamate 105. Position 116 is an N6,N6,N6-trimethyllysine (lysine 116). Ca(2+) contacts are provided by aspartate 130, aspartate 132, aspartate 134, glutamine 136, and glutamate 141.

It belongs to the calmodulin family.

Functionally, calmodulin mediates the control of a large number of enzymes, ion channels and other proteins by Ca(2+). Among the enzymes to be stimulated by the calmodulin-Ca(2+) complex are a number of protein kinases and phosphatases. The protein is Calmodulin of Metridium senile (Brown sea anemone).